The following is a 133-amino-acid chain: Ribosome-binding factor A (133 aa).

This sequence belongs to the RbfA family. As to quaternary structure, monomer. Binds 30S ribosomal subunits, but not 50S ribosomal subunits or 70S ribosomes.

The protein localises to the cytoplasm. Its function is as follows. One of several proteins that assist in the late maturation steps of the functional core of the 30S ribosomal subunit. Associates with free 30S ribosomal subunits (but not with 30S subunits that are part of 70S ribosomes or polysomes). Required for efficient processing of 16S rRNA. May interact with the 5'-terminal helix region of 16S rRNA. In Salmonella heidelberg (strain SL476), this protein is Ribosome-binding factor A.